Consider the following 364-residue polypeptide: Nucleosome assembly protein 1;2 (364 aa).

Positions Val-32–Glu-86 form a coiled coil. Residues Leu-53–Gln-68 carry the Nuclear export signal motif. Positions Lys-227–Lys-232 match the Nuclear localization signal motif. 2 disordered regions span residues Phe-250–Thr-269 and Gly-301–Gln-364. Composition is skewed to acidic residues over residues Pro-259 to Thr-269 and Ala-304 to Asp-340. Cys-361 carries the post-translational modification Cysteine methyl ester. Cys-361 is lipidated: S-farnesyl cysteine. The propeptide at Lys-362–Gln-364 is removed in mature form.

The protein belongs to the nucleosome assembly protein (NAP) family. In terms of assembly, binds preferentially histone H1 in vitro. Highly expressed in tissues exhibiting active cell-division activities, such as root and shoot meristems and young flowers.

The protein resides in the nucleus. Its subcellular location is the cytoplasm. Its function is as follows. May modulate chromatin structure by regulation of nucleosome assembly/disassembly. The sequence is that of Nucleosome assembly protein 1;2 (NAP1;2) from Oryza sativa subsp. indica (Rice).